The chain runs to 227 residues: ATP-dependent dethiobiotin synthetase BioD (227 aa).

Position 13-18 (13-18) interacts with ATP; the sequence is DVGKTV. Threonine 17 is a binding site for Mg(2+). The active site involves lysine 38. ATP-binding positions include aspartate 55, 116 to 119, 176 to 177, and 205 to 207; these read EGAG, NR, and PYI. The Mg(2+) site is built by aspartate 55 and glutamate 116.

This sequence belongs to the dethiobiotin synthetase family. In terms of assembly, homodimer. The cofactor is Mg(2+).

Its subcellular location is the cytoplasm. The catalysed reaction is (7R,8S)-7,8-diammoniononanoate + CO2 + ATP = (4R,5S)-dethiobiotin + ADP + phosphate + 3 H(+). It functions in the pathway cofactor biosynthesis; biotin biosynthesis; biotin from 7,8-diaminononanoate: step 1/2. Catalyzes a mechanistically unusual reaction, the ATP-dependent insertion of CO2 between the N7 and N8 nitrogen atoms of 7,8-diaminopelargonic acid (DAPA, also called 7,8-diammoniononanoate) to form a ureido ring. The protein is ATP-dependent dethiobiotin synthetase BioD of Vibrio vulnificus (strain CMCP6).